The following is a 404-amino-acid chain: Zinc finger protein zfs1 (404 aa).

Positions 134–149 (SYLHSGSSPHGNTSNH) are enriched in polar residues. 2 disordered regions span residues 134-168 (SYLH…TGSG) and 259-322 (SNAS…APNG). Residues 150–168 (PSPISSLESLPSRSSTGSG) show a composition bias toward low complexity. A compositionally biased stretch (polar residues) spans 259 to 283 (SNASIRNAPSNLSKQFSPSGNSPLT). Residues 304–317 (GSASHPHGSGSSNG) show a composition bias toward low complexity. C3H1-type zinc fingers lie at residues 326–354 (LYKT…HGNQ) and 364–392 (KYKS…HDES).

In terms of assembly, interacts with moc3.

The protein localises to the cytoplasm. It localises to the nucleus. Binds to specific AU-rich elements (ARE) in the 3'-untranslated region of target mRNAs and promotes their degradation. Binds to ARE present in the arz1 mRNA and stimulates the rate of arz1 mRNA decay. Required for coordination of septum formation with exit from mitosis. Involved in the mating response pathway. Induces sexual development and ascus formation. The chain is Zinc finger protein zfs1 (zfs1) from Schizosaccharomyces pombe (strain 972 / ATCC 24843) (Fission yeast).